The following is a 333-amino-acid chain: Acetyltransferase Pat (333 aa).

Residues 88–91 (GEIA), 98–99 (RS), and arginine 138 each bind 3',5'-cyclic AMP. One can recognise an N-acetyltransferase domain in the interval 156–318 (LMLRPVLPGD…GELSLGREMV (163 aa)). Histidine 173 lines the substrate pocket. Aspartate 214 contacts Mg(2+). Residues 238–240 (FTV), 246–251 (GRGIGS), asparagine 277, and arginine 286 each bind substrate.

In terms of assembly, homodimer. Mg(2+) serves as cofactor.

Its activity is regulated as follows. Autoinhibited and allosterically activated by 3,5-cyclic adenosine monophosphate (cAMP). An extensive conformational rearrangement relieves this autoinhibition by means of a substrate-mimicking lid that covers the protein-substrate binding surface. Functionally, catalyzes specifically the acetylation of the epsilon-amino group of a highly conserved lysine residue in acetyl-CoA synthetase (ACS). This acetylation results in the inactivation of ACS activity and could be important for mycobacteria to adjust to environmental changes. In Mycobacterium tuberculosis (strain ATCC 25618 / H37Rv), this protein is Acetyltransferase Pat.